The sequence spans 118 residues: Large ribosomal subunit protein bL20 (118 aa).

It belongs to the bacterial ribosomal protein bL20 family.

Binds directly to 23S ribosomal RNA and is necessary for the in vitro assembly process of the 50S ribosomal subunit. It is not involved in the protein synthesizing functions of that subunit. The protein is Large ribosomal subunit protein bL20 of Pectobacterium atrosepticum (strain SCRI 1043 / ATCC BAA-672) (Erwinia carotovora subsp. atroseptica).